The sequence spans 196 residues: Probable malonic semialdehyde reductase RutE (196 aa).

This sequence belongs to the nitroreductase family. HadB/RutE subfamily. FMN serves as cofactor.

It catalyses the reaction 3-hydroxypropanoate + NADP(+) = 3-oxopropanoate + NADPH + H(+). Its function is as follows. May reduce toxic product malonic semialdehyde to 3-hydroxypropionic acid, which is excreted. In Escherichia coli O81 (strain ED1a), this protein is Probable malonic semialdehyde reductase RutE.